A 192-amino-acid chain; its full sequence is Leucine-rich repeat-containing protein 51 (192 aa).

LRR repeat units lie at residues 49 to 71, 80 to 101, and 103 to 124; these read SLTQSLWLNNNVLNDLKDFNQVV, NLAWIDLSFNDLTTIDPVLTTF, and NLSVLYLHGNSIHRLGEVNKLA. In terms of domain architecture, LRRCT spans 137-175; sequence NPIEEEKGYRQYVLCNLPRITTFDFSGVTKADRSTAEVW.

Its subcellular location is the cytoplasm. This Rattus norvegicus (Rat) protein is Leucine-rich repeat-containing protein 51.